The primary structure comprises 254 residues: Type II methyl-directed restriction enzyme DpnI (254 aa).

Belongs to the DpnI type II restriction endonuclease family.

The catalysed reaction is Endonucleolytic cleavage of DNA to give specific double-stranded fragments with terminal 5'-phosphates.. Functionally, an M and P subtype restriction enzyme that recognizes the double-stranded, methylated sequence 5'-G(Me)ATC-3' and cleaves after A-2. The protein is Type II methyl-directed restriction enzyme DpnI of Streptococcus pneumoniae serotype 4 (strain ATCC BAA-334 / TIGR4).